The chain runs to 118 residues: Large ribosomal subunit protein bL20 (118 aa).

Belongs to the bacterial ribosomal protein bL20 family.

Binds directly to 23S ribosomal RNA and is necessary for the in vitro assembly process of the 50S ribosomal subunit. It is not involved in the protein synthesizing functions of that subunit. In Gluconobacter oxydans (strain 621H) (Gluconobacter suboxydans), this protein is Large ribosomal subunit protein bL20.